Consider the following 115-residue polypeptide: Arsenic resistance transcriptional regulator ArsR2 (115 aa).

Positions 1 to 90 (MITPPDVFKS…EMLQVTLQAN (90 aa)) constitute an HTH arsR-type domain. 2 residues coordinate arsenite: Cys30 and Cys32. Residues 31–54 (VCELMCALNDSQPKISRHLAQLRS) constitute a DNA-binding region (H-T-H motif).

In terms of assembly, homodimer.

Its subcellular location is the cytoplasm. Binds arsenite and regulates the expression of arsenic efflux pumps. In vitro, also binds antimony and bismuth, but not arsenate. The polypeptide is Arsenic resistance transcriptional regulator ArsR2 (Pseudomonas putida (strain ATCC 47054 / DSM 6125 / CFBP 8728 / NCIMB 11950 / KT2440)).